A 30-amino-acid polypeptide reads, in one-letter code: 2S seed storage-like protein (30 aa).

This sequence belongs to the 2S seed storage albumins family. The mature protein is a heterodimer of a small and a large chain linked by 2 disulfide bonds. In terms of tissue distribution, extracted from castor bean.

This is a 2S seed storage protein. Inhibits spore germination in R.solani and F.oxysporum. Exhibits anti-trypsin activity. This Ricinus communis (Castor bean) protein is 2S seed storage-like protein.